The primary structure comprises 193 residues: Signal peptidase I (193 aa).

The Cytoplasmic portion of the chain corresponds to 1–25; that stretch reads MTEEQKPTSEKSVKRKSNTYWEWGK. A helical membrane pass occupies residues 26–42; it reads AIIIAVALALLIRHFLF. At 43 to 193 the chain is on the extracellular side; that stretch reads EPYLVEGSSM…FPFHDMRQTK (151 aa). Active-site residues include Ser-51 and Lys-93.

It belongs to the peptidase S26 family.

The protein localises to the cell membrane. The catalysed reaction is Cleavage of hydrophobic, N-terminal signal or leader sequences from secreted and periplasmic proteins.. The sequence is that of Signal peptidase I (sipS2) from Bacillus amyloliquefaciens (Bacillus velezensis).